A 321-amino-acid chain; its full sequence is Protein ZAR1-like (321 aa).

Positions 110–214 (RTLSSCSPWD…GDAASEPLRR (105 aa)) are disordered. Basic and acidic residues predominate over residues 145–154 (LRRDGDEAES). Residues 222-307 (PKYGYFHCKD…QELCGRCKDK (86 aa)) form a 3CxxC-type zinc finger.

It belongs to the ZAR1 family. Interacts with YBX2.

It localises to the cytoplasm. Its subcellular location is the cytoplasmic ribonucleoprotein granule. Its function is as follows. mRNA-binding protein required for maternal mRNA storage, translation and degradation during oocyte maturation. Probably promotes formation of some phase-separated membraneless compartment that stores maternal mRNAs in oocytes: acts by undergoing liquid-liquid phase separation upon binding to maternal mRNAs. Binds to the 3'-UTR of maternal mRNAs, inhibiting their translation. This is Protein ZAR1-like from Homo sapiens (Human).